We begin with the raw amino-acid sequence, 31 residues long: Cytochrome b6-f complex subunit 6 (31 aa).

The chain crosses the membrane as a helical span at residues 4-26; it reads ITSYFGFLLAASTITSALLIGLS.

The protein belongs to the PetL family. As to quaternary structure, the 4 large subunits of the cytochrome b6-f complex are cytochrome b6, subunit IV (17 kDa polypeptide, PetD), cytochrome f and the Rieske protein, while the 4 small subunits are PetG, PetL, PetM and PetN. The complex functions as a dimer.

The protein resides in the plastid. Its subcellular location is the chloroplast thylakoid membrane. In terms of biological role, component of the cytochrome b6-f complex, which mediates electron transfer between photosystem II (PSII) and photosystem I (PSI), cyclic electron flow around PSI, and state transitions. PetL is important for photoautotrophic growth as well as for electron transfer efficiency and stability of the cytochrome b6-f complex. The sequence is that of Cytochrome b6-f complex subunit 6 from Chloranthus spicatus (Chulantree).